The sequence spans 445 residues: 23S rRNA (uracil(1939)-C(5))-methyltransferase RlmD (445 aa).

Positions 1-21 (MARRRKQLPETPEPASIETLS) are disordered. Residues 5–64 (RKQLPETPEPASIETLSHDGRGIARRDGKTTFIDNALPGEEVMFKFTYMRRKFDEGKAVE) form the TRAM domain. [4Fe-4S] cluster is bound by residues Cys-77, Cys-83, Cys-86, and Cys-165. S-adenosyl-L-methionine is bound by residues Gln-275, Phe-304, Asn-309, Glu-325, Asp-352, and Asp-373. Cys-399 acts as the Nucleophile in catalysis.

The protein belongs to the class I-like SAM-binding methyltransferase superfamily. RNA M5U methyltransferase family. RlmD subfamily.

The catalysed reaction is uridine(1939) in 23S rRNA + S-adenosyl-L-methionine = 5-methyluridine(1939) in 23S rRNA + S-adenosyl-L-homocysteine + H(+). Catalyzes the formation of 5-methyl-uridine at position 1939 (m5U1939) in 23S rRNA. The polypeptide is 23S rRNA (uracil(1939)-C(5))-methyltransferase RlmD (Alcanivorax borkumensis (strain ATCC 700651 / DSM 11573 / NCIMB 13689 / SK2)).